A 160-amino-acid chain; its full sequence is Protein cornichon homolog 2 (160 aa).

Over 1 to 10 (MAFTFAAFCY) the chain is Cytoplasmic. The helical transmembrane segment at 11–31 (MLTLVLCAALIFFVIWQIIAF) threads the bilayer. At 32 to 72 (DELRTDFKNPIDQSNPTRARERILNIERICNLLRRLVVPEY) the chain is on the lumenal side. Residues 73–93 (SIHGLFCLMFMCAGEWVTLGL) traverse the membrane as a helical segment. Residues 94–138 (NIPLLLYHLWRFFHRPADGSEVMYDPVSVMNADILNYCQKESWCK) are Cytoplasmic-facing. A helical membrane pass occupies residues 139–159 (LGFYLLSFFYYLYSMVYALVS). Residue Phe160 is a topological domain, lumenal.

It belongs to the cornichon family.

The protein localises to the membrane. Functionally, regulates the trafficking and gating properties of AMPA-selective glutamate receptors (AMPARs). The sequence is that of Protein cornichon homolog 2 (cnih2) from Danio rerio (Zebrafish).